We begin with the raw amino-acid sequence, 173 residues long: Co-chaperone protein HscB homolog (173 aa).

The J domain occupies 3–75 (NPFALFDLPI…ILRADCIIAL (73 aa)).

Belongs to the HscB family. In terms of assembly, interacts with HscA and stimulates its ATPase activity.

Co-chaperone involved in the maturation of iron-sulfur cluster-containing proteins. Seems to help targeting proteins to be folded toward HscA. The polypeptide is Co-chaperone protein HscB homolog (Mannheimia succiniciproducens (strain KCTC 0769BP / MBEL55E)).